The sequence spans 208 residues: Small ribosomal subunit protein uS4 (208 aa).

Residues 98–161 enclose the S4 RNA-binding domain; sequence RRLDNVIYRL…RKIPVLAEAQ (64 aa).

The protein belongs to the universal ribosomal protein uS4 family. As to quaternary structure, part of the 30S ribosomal subunit. Contacts protein S5. The interaction surface between S4 and S5 is involved in control of translational fidelity.

Functionally, one of the primary rRNA binding proteins, it binds directly to 16S rRNA where it nucleates assembly of the body of the 30S subunit. Its function is as follows. With S5 and S12 plays an important role in translational accuracy. This Nitratidesulfovibrio vulgaris (strain ATCC 29579 / DSM 644 / CCUG 34227 / NCIMB 8303 / VKM B-1760 / Hildenborough) (Desulfovibrio vulgaris) protein is Small ribosomal subunit protein uS4.